A 206-amino-acid chain; its full sequence is Probable glutathione peroxidase 3, mitochondrial (206 aa).

The transit peptide at 1 to 12 directs the protein to the mitochondrion; sequence MPRSSRWVNQRA. The active site involves C80.

This sequence belongs to the glutathione peroxidase family. Interacts with ABI1 and ABI2. In terms of tissue distribution, ubiquitous.

Its subcellular location is the mitochondrion. It catalyses the reaction 2 glutathione + H2O2 = glutathione disulfide + 2 H2O. Its activity is regulated as follows. The redox states are modulated by H(2)O(2). Functionally, may constitute a glutathione peroxidase-like protective system against oxidative stresses. Involved positively in abscisic acid (ABA) signaling pathway that regulates numerous ABA responses, such as stomatal closure, seed germination and inhibition of vegetative growth. Oxidizes and represses target proteins (e.g. the phosphatase activity of ABI1 and ABI2) when oxidized by H(2)O(2), probably after ABA signaling. Modulates the calcium channel activity in guard cells in response to ABA or H(2)O(2). Confers tolerance to drought stress, by enhancing the ABA-dependent stomatal closure. This chain is Probable glutathione peroxidase 3, mitochondrial (GPX3), found in Arabidopsis thaliana (Mouse-ear cress).